Reading from the N-terminus, the 467-residue chain is Bifunctional enzyme LpxC/FabZ (467 aa).

The tract at residues 1 to 306 (MLIHQRTLQN…FVKQLKKYAD (306 aa)) is UDP-3-O-acyl-N-acetylglucosamine deacetylase. 3 residues coordinate Zn(2+): His-79, His-264, and Asp-268. The Proton donor role is filled by His-291. Residues 307–467 (RNKLARQYQH…LMATVMEKKN (161 aa)) form a 3-hydroxyacyl-[acyl-carrier-protein] dehydratase region. His-370 is a catalytic residue.

This sequence in the N-terminal section; belongs to the LpxC family. The protein in the C-terminal section; belongs to the thioester dehydratase family. Requires Zn(2+) as cofactor.

It localises to the cytoplasm. The enzyme catalyses a UDP-3-O-[(3R)-3-hydroxyacyl]-N-acetyl-alpha-D-glucosamine + H2O = a UDP-3-O-[(3R)-3-hydroxyacyl]-alpha-D-glucosamine + acetate. It carries out the reaction a (3R)-hydroxyacyl-[ACP] = a (2E)-enoyl-[ACP] + H2O. The protein operates within glycolipid biosynthesis; lipid IV(A) biosynthesis; lipid IV(A) from (3R)-3-hydroxytetradecanoyl-[acyl-carrier-protein] and UDP-N-acetyl-alpha-D-glucosamine: step 2/6. Functionally, catalyzes the hydrolysis of UDP-3-O-myristoyl-N-acetylglucosamine to form UDP-3-O-myristoylglucosamine and acetate, the committed step in lipid A biosynthesis. Involved in unsaturated fatty acids biosynthesis. Catalyzes the dehydration of short chain beta-hydroxyacyl-ACPs and long chain saturated and unsaturated beta-hydroxyacyl-ACPs. The polypeptide is Bifunctional enzyme LpxC/FabZ (lpxC/fabZ) (Chlorobaculum tepidum (strain ATCC 49652 / DSM 12025 / NBRC 103806 / TLS) (Chlorobium tepidum)).